We begin with the raw amino-acid sequence, 377 residues long: Ribosomal RNA large subunit methyltransferase G (377 aa).

The protein belongs to the methyltransferase superfamily. RlmG family.

It is found in the cytoplasm. It catalyses the reaction guanosine(1835) in 23S rRNA + S-adenosyl-L-methionine = N(2)-methylguanosine(1835) in 23S rRNA + S-adenosyl-L-homocysteine + H(+). Its function is as follows. Specifically methylates the guanine in position 1835 (m2G1835) of 23S rRNA. The sequence is that of Ribosomal RNA large subunit methyltransferase G from Shewanella sp. (strain MR-4).